Reading from the N-terminus, the 941-residue chain is Glycine dehydrogenase (decarboxylating) (941 aa).

N6-(pyridoxal phosphate)lysine is present on lysine 692.

Belongs to the GcvP family. The glycine cleavage system is composed of four proteins: P, T, L and H. Pyridoxal 5'-phosphate is required as a cofactor.

It carries out the reaction N(6)-[(R)-lipoyl]-L-lysyl-[glycine-cleavage complex H protein] + glycine + H(+) = N(6)-[(R)-S(8)-aminomethyldihydrolipoyl]-L-lysyl-[glycine-cleavage complex H protein] + CO2. Functionally, the glycine cleavage system catalyzes the degradation of glycine. The P protein binds the alpha-amino group of glycine through its pyridoxal phosphate cofactor; CO(2) is released and the remaining methylamine moiety is then transferred to the lipoamide cofactor of the H protein. In Mycobacterium bovis (strain ATCC BAA-935 / AF2122/97), this protein is Glycine dehydrogenase (decarboxylating).